The following is a 634-amino-acid chain: uncharacterized protein (634 aa).

This is an uncharacterized protein from Homo sapiens (Human).